The primary structure comprises 340 residues: Cell division protein FtsQ (340 aa).

The tract at residues 1-41 (MQGLNPFHRDQGAGGRPAPVRPAPARPAPVAPRTPRKDPAP) is disordered. Residues 1-55 (MQGLNPFHRDQGAGGRPAPVRPAPARPAPVAPRTPRKDPAPSRLAYRLNRMMLRP) are Cytoplasmic-facing. Pro residues predominate over residues 19–32 (PVRPAPARPAPVAP). The helical transmembrane segment at 56 to 78 (LVRRLVHVGLPAFLAALVAGIWL) threads the bilayer. Topologically, residues 79 to 340 (SDDTRRANLT…NAAKAKKKSG (262 aa)) are periplasmic. The 69-residue stretch at 104–172 (FMVKMMTIEG…GVLSAVVTER (69 aa)) folds into the POTRA domain. The disordered stretch occupies residues 308–340 (RQARGQPELGPDGTPLAPEATAGNAAKAKKKSG). Over residues 324-333 (APEATAGNAA) the composition is skewed to low complexity.

Belongs to the FtsQ/DivIB family. FtsQ subfamily.

It is found in the cell inner membrane. In terms of biological role, essential cell division protein. This is Cell division protein FtsQ from Paracoccus denitrificans (strain Pd 1222).